The chain runs to 723 residues: BBSome complex assembly protein BBS10 (723 aa).

It belongs to the TCP-1 chaperonin family. In terms of assembly, component of a complex composed at least of MKKS, BBS10, BBS12, TCP1, CCT2, CCT3, CCT4, CCT5 and CCT8.

The protein localises to the cell projection. Its subcellular location is the cilium. In terms of biological role, probable molecular chaperone that assists the folding of proteins upon ATP hydrolysis. Plays a role in the assembly of BBSome, a complex involved in ciliogenesis regulating transports vesicles to the cilia. Involved in adipogenic differentiation. This is BBSome complex assembly protein BBS10 (BBS10) from Homo sapiens (Human).